Here is a 370-residue protein sequence, read N- to C-terminus: Anhydro-N-acetylmuramic acid kinase (370 aa).

ATP is bound at residue 13–20 (GTSMDGVD).

Belongs to the anhydro-N-acetylmuramic acid kinase family.

It catalyses the reaction 1,6-anhydro-N-acetyl-beta-muramate + ATP + H2O = N-acetyl-D-muramate 6-phosphate + ADP + H(+). It functions in the pathway amino-sugar metabolism; 1,6-anhydro-N-acetylmuramate degradation. Its pathway is cell wall biogenesis; peptidoglycan recycling. Its function is as follows. Catalyzes the specific phosphorylation of 1,6-anhydro-N-acetylmuramic acid (anhMurNAc) with the simultaneous cleavage of the 1,6-anhydro ring, generating MurNAc-6-P. Is required for the utilization of anhMurNAc either imported from the medium or derived from its own cell wall murein, and thus plays a role in cell wall recycling. This is Anhydro-N-acetylmuramic acid kinase from Shewanella denitrificans (strain OS217 / ATCC BAA-1090 / DSM 15013).